A 779-amino-acid chain; its full sequence is Nucleus-vacuole junction protein 2 (779 aa).

Residues 1–2 are Cytoplasmic-facing; that stretch reads MF. A helical; Signal-anchor for type II membrane protein transmembrane segment spans residues 3 to 23; sequence FAFLITYLLGGVTFLPFILFI. At 24–779 the chain is on the lumenal side; the sequence is YLLTRPTHKS…VRPVPPIPKL (756 aa). A glycan (N-linked (GlcNAc...) asparagine) is linked at Asn233. Residues 238-429 form the SMP-LTD domain; that stretch reads SSPDTDWLNA…MPNMNDLAFF (192 aa). Over residues 454-465 the composition is skewed to basic and acidic residues; the sequence is PAEKDAKAERKK. Disordered regions lie at residues 454–539 and 573–592; these read PAEK…NKSS and LKTK…QTTL. Residue Ser473 is modified to Phosphoserine. Over residues 484–494 the composition is skewed to polar residues; it reads RSSNSNDTAPS. Residues Asn489 and Asn536 are each glycosylated (N-linked (GlcNAc...) asparagine). N-linked (GlcNAc...) asparagine glycosylation is found at Asn640 and Asn660. Positions 654–779 are disordered; sequence QNAIDFNVTN…VRPVPPIPKL (126 aa). Positions 660 to 674 are enriched in polar residues; the sequence is NVTNTHSPSRSISSE. Basic and acidic residues predominate over residues 675–691; that stretch reads KSYKAAERGQQDKHNDV. A compositionally biased stretch (polar residues) spans 733-750; that stretch reads GQPTLHPQGQLPIQNVEQ.

Its subcellular location is the endoplasmic reticulum membrane. The protein localises to the nucleus membrane. In terms of biological role, during endoplasmic reticulum (ER) stress or when cellular ceramide levels increase, induces contacts between the ER and medial-Golgi complex to facilitate non-vesicular transport of ceramides from the ER to the Golgi complex where they are converted to complex sphingolipids, preventing toxic ceramide accumulation. The protein is Nucleus-vacuole junction protein 2 (nvj2) of Schizosaccharomyces pombe (strain 972 / ATCC 24843) (Fission yeast).